A 305-amino-acid polypeptide reads, in one-letter code: Aurora/IPL1-related protein kinase 2 (305 aa).

The region spanning 30–280 is the Protein kinase domain; sequence FEIGRPLGKG…LEQVKEHYWI (251 aa). Residues 36–44 and lysine 59 each bind ATP; that span reads LGKGKFGSV. Catalysis depends on aspartate 153, which acts as the Proton acceptor.

It belongs to the protein kinase superfamily. Ser/Thr protein kinase family. Aurora subfamily. As to quaternary structure, component of the CPC complex which consists of icp-1; csc-1; bir-1 and air-2. Within the complex, interacts with icp-1; csc-1 and bir-1. Interacts with zen-4. Interacts with tlk-1 and bmk-1. Post-translationally, phosphorylated. Increased phosphorylation upon chromatin obstructions at anaphase.

It is found in the cytoplasm. The protein localises to the cytoskeleton. It localises to the chromosome. The protein resides in the midbody. Its subcellular location is the spindle. The enzyme catalyses L-seryl-[protein] + ATP = O-phospho-L-seryl-[protein] + ADP + H(+). The catalysed reaction is L-threonyl-[protein] + ATP = O-phospho-L-threonyl-[protein] + ADP + H(+). Serine/threonine-protein kinase component of the chromosomal passenger complex (CPC), a complex that acts as a key regulator of chromosome segregation and cytokinesis. The CPC complex has essential functions at the centromere in ensuring correct chromosome alignment and segregation. Required for histone H3 phosphorylation during segregation of homologous chromosomes in meiosis and mitosis. Required for histone H3 'Ser-10' phosphorylation. Phosphorylates tlk-1 at 'Ser-634', which enhances its activity. Phosphorylates zen-4 at 'Ser-680'. Required for the recruitment of bub-1 to the ring-shaped domain between chromosomes during meiotic anaphase I. Also required for the localization of the condensin I complex subunit smc-4 to mitotic chromosomes. Acts at the spindle midzone and the midbody to prevent cleavage furrow regression upon chromatin obstructions during cytokinesis. The polypeptide is Aurora/IPL1-related protein kinase 2 (Caenorhabditis elegans).